An 85-amino-acid polypeptide reads, in one-letter code: Large ribosomal subunit protein bL27 (85 aa).

Residues 1 to 20 (MAHKKAGGSSRNGRDSEAKR) are disordered.

This sequence belongs to the bacterial ribosomal protein bL27 family.

This chain is Large ribosomal subunit protein bL27, found in Aeromonas salmonicida (strain A449).